Consider the following 512-residue polypeptide: Maturase K (512 aa).

It belongs to the intron maturase 2 family. MatK subfamily.

It localises to the plastid. Its subcellular location is the chloroplast. Usually encoded in the trnK tRNA gene intron. Probably assists in splicing its own and other chloroplast group II introns. This is Maturase K from Oenothera glazioviana (Large-flowered evening primrose).